The following is a 427-amino-acid chain: Lactadherin (427 aa).

The N-terminal stretch at methionine 1–alanine 22 is a signal peptide. EGF-like domains are found at residues serine 24–asparagine 61 and glutamate 64–glutamate 108. Cystine bridges form between cysteine 28–cysteine 39, cysteine 33–cysteine 49, and cysteine 51–cysteine 60. N-linked (GlcNAc...) asparagine glycosylation is present at asparagine 61. 6 disulfides stabilise this stretch: cysteine 68–cysteine 79, cysteine 73–cysteine 96, cysteine 98–cysteine 107, cysteine 111–cysteine 267, cysteine 254–cysteine 258, and cysteine 272–cysteine 427. The Cell attachment site signature appears at arginine 87–aspartate 89. 2 F5/8 type C domains span residues cysteine 111 to cysteine 267 and cysteine 272 to cysteine 427. Residue asparagine 230 is glycosylated (N-linked (GlcNAc...) asparagine). 2 N-linked (GlcNAc...) asparagine glycosylation sites follow: asparagine 280 and asparagine 390.

Spleen, lung, heart, brain and muscle.

The protein localises to the membrane. It is found in the secreted. Its subcellular location is the cytoplasmic vesicle. It localises to the secretory vesicle. The protein resides in the acrosome membrane. In terms of biological role, contributes to phagocytic removal of apoptotic cells in many tissues. Plays an important role in the maintenance of intestinal epithelial homeostasis and the promotion of mucosal healing. Promotes VEGF-dependent neovascularization. Specific ligand for the alpha-v/beta-3 and alpha-v/beta-5 receptors. Also binds to phosphatidylserine-enriched cell surfaces in a receptor-independent manner. Zona pellucida-binding protein which may play a role in gamete interaction. Appears to participate in the O-acetylation of GD3 ganglioside sialic acid. The protein is Lactadherin (Mfge8) of Rattus norvegicus (Rat).